We begin with the raw amino-acid sequence, 485 residues long: Glutamyl-tRNA(Gln) amidotransferase subunit A (485 aa).

Active-site charge relay system residues include Lys79 and Ser154. The active-site Acyl-ester intermediate is Ser178.

It belongs to the amidase family. GatA subfamily. As to quaternary structure, heterotrimer of A, B and C subunits.

It catalyses the reaction L-glutamyl-tRNA(Gln) + L-glutamine + ATP + H2O = L-glutaminyl-tRNA(Gln) + L-glutamate + ADP + phosphate + H(+). Its function is as follows. Allows the formation of correctly charged Gln-tRNA(Gln) through the transamidation of misacylated Glu-tRNA(Gln) in organisms which lack glutaminyl-tRNA synthetase. The reaction takes place in the presence of glutamine and ATP through an activated gamma-phospho-Glu-tRNA(Gln). The sequence is that of Glutamyl-tRNA(Gln) amidotransferase subunit A from Geobacillus kaustophilus (strain HTA426).